The chain runs to 722 residues: Polyribonucleotide nucleotidyltransferase (722 aa).

Mg(2+) is bound by residues D495 and D501. Residues 562–621 (PRLLSFRIDPELIGTVIGPGGRTIKGITERTNTKIDIEDGGIVTIASHDGAAAEEAQRII) form the KH domain. One can recognise an S1 motif domain in the interval 631–699 (GEIFPGSITR…NRGRINLTLR (69 aa)). A disordered region spans residues 700–722 (GVSQNGGMSNYPEPTPTPVAPLT). Pro residues predominate over residues 712 to 722 (EPTPTPVAPLT).

This sequence belongs to the polyribonucleotide nucleotidyltransferase family. Mg(2+) serves as cofactor.

The protein resides in the cytoplasm. The catalysed reaction is RNA(n+1) + phosphate = RNA(n) + a ribonucleoside 5'-diphosphate. Its function is as follows. Involved in mRNA degradation. Catalyzes the phosphorolysis of single-stranded polyribonucleotides processively in the 3'- to 5'-direction. In Prochlorococcus marinus (strain NATL2A), this protein is Polyribonucleotide nucleotidyltransferase.